A 495-amino-acid polypeptide reads, in one-letter code: ATP synthase subunit beta, chloroplastic (495 aa).

Position 172–179 (172–179 (GGAGVGKT)) interacts with ATP.

The protein belongs to the ATPase alpha/beta chains family. As to quaternary structure, F-type ATPases have 2 components, CF(1) - the catalytic core - and CF(0) - the membrane proton channel. CF(1) has five subunits: alpha(3), beta(3), gamma(1), delta(1), epsilon(1). CF(0) has four main subunits: a(1), b(1), b'(1) and c(9-12).

It localises to the plastid. The protein resides in the chloroplast thylakoid membrane. It catalyses the reaction ATP + H2O + 4 H(+)(in) = ADP + phosphate + 5 H(+)(out). Its function is as follows. Produces ATP from ADP in the presence of a proton gradient across the membrane. The catalytic sites are hosted primarily by the beta subunits. The chain is ATP synthase subunit beta, chloroplastic from Scilla siberica (Siberian squill).